The sequence spans 213 residues: Thymidylate kinase (213 aa).

Residue 10-17 (GPDGAGKT) participates in ATP binding.

The protein belongs to the thymidylate kinase family.

The enzyme catalyses dTMP + ATP = dTDP + ADP. Phosphorylation of dTMP to form dTDP in both de novo and salvage pathways of dTTP synthesis. The polypeptide is Thymidylate kinase (Limosilactobacillus reuteri (strain DSM 20016) (Lactobacillus reuteri)).